Consider the following 897-residue polypeptide: Alpha-actinin-2 (897 aa).

Positions 1 to 257 (MNSMNQIETN…IMTYVSCFYH (257 aa)) are actin-binding. 2 consecutive Calponin-homology (CH) domains span residues 41 to 145 (KQQR…LRFA) and 154 to 260 (TSAK…HAFA). 4 Spectrin repeats span residues 284-394 (RLME…WLLN), 404-509 (HLAE…ALER), 519-630 (QLHL…SLQE), and 640-743 (RLRR…EVET). EF-hand domains lie at 756–791 (EQMNDFRASFNHFDRRKNGLMDHDDFRACLISMGYD) and 792–827 (LGEAEFARIMSLVDPNGQGTVTFQSFIDFMTRETAD). 6 residues coordinate Ca(2+): Asp769, Asn773, Asp780, Asp805, Asn807, and Thr811.

It belongs to the alpha-actinin family. As to quaternary structure, homodimer; antiparallel. Post-translationally, ubiquitinated by FBXL22, leading to proteasomal degradation.

It localises to the cytoplasm. The protein resides in the myofibril. It is found in the sarcomere. The protein localises to the z line. Its function is as follows. F-actin cross-linking protein which is thought to anchor actin to a variety of intracellular structures. This is a bundling protein. In Gallus gallus (Chicken), this protein is Alpha-actinin-2 (ACTN2).